We begin with the raw amino-acid sequence, 681 residues long: Epithelial splicing regulatory protein 1 (681 aa).

3 RRM domains span residues 225-302, 326-406, and 445-525; these read TVVR…KATG, VIVR…RSTA, and DCIR…QCSA. Residue serine 543 is modified to Phosphoserine. Arginine 582 is subject to Omega-N-methylarginine.

This sequence belongs to the ESRP family. As to expression, epithelial cell-specific.

Its subcellular location is the nucleus. MRNA splicing factor that regulates the formation of epithelial cell-specific isoforms. Specifically regulates the expression of FGFR2-IIIb, an epithelial cell-specific isoform of FGFR2. Also regulates the splicing of CD44, CTNND1, ENAH, 3 transcripts that undergo changes in splicing during the epithelial-to-mesenchymal transition (EMT). Acts by directly binding specific sequences in mRNAs. Binds the GU-rich sequence motifs in the ISE/ISS-3, a cis-element regulatory region present in the mRNA of FGFR2. Regulates splicing and expression of genes involved in inner ear development, auditory hair cell differentiation, and cell fate specification in the cochlear epithelium. This chain is Epithelial splicing regulatory protein 1 (ESRP1), found in Homo sapiens (Human).